The chain runs to 96 residues: Large ribosomal subunit protein uL23 (96 aa).

This sequence belongs to the universal ribosomal protein uL23 family. As to quaternary structure, part of the 50S ribosomal subunit. Contacts protein L29, and trigger factor when it is bound to the ribosome.

One of the early assembly proteins it binds 23S rRNA. One of the proteins that surrounds the polypeptide exit tunnel on the outside of the ribosome. Forms the main docking site for trigger factor binding to the ribosome. The sequence is that of Large ribosomal subunit protein uL23 from Oleidesulfovibrio alaskensis (strain ATCC BAA-1058 / DSM 17464 / G20) (Desulfovibrio alaskensis).